The sequence spans 313 residues: Small glutamine-rich tetratricopeptide repeat-containing protein alpha (313 aa).

The segment at 69–97 (KELPPDLRSPQETPPSEEDSAEAERLKTE) is disordered. Serine 77 carries the phosphoserine modification. At threonine 81 the chain carries Phosphothreonine. Serine 84 carries the post-translational modification Phosphoserine. TPR repeat units follow at residues 91 to 124 (AERL…NPAN), 125 to 158 (AVYF…DPSY), and 159 to 192 (SKAY…DPDN). Lysine 137 is subject to N6-acetyllysine. The residue at position 301 (serine 301) is a Phosphoserine. Threonine 303 is modified (phosphothreonine). Serine 305 is modified (phosphoserine).

Belongs to the SGT family. Homodimer. Homooligomer. Interacts with DNAJC5 and DNAJC5B. Interacts (via TPR repeats) with HSP90AA1. Interacts (via Gln-rich region) with SLC2A1. Interacts with HSP90AB1. Interacts (via TPR repeats) with HSPA8/Hsc70; the interaction is direct. Interacts with BAG6 (via ubiquitin-like domain); interaction prevents interaction between BAG6 and RNF126. Forms a multiprotein complex, at least composed of DNAJB12, DNAJB14, HSPA8/Hsc70 and SGTA; interaction with DNAJB14 and HSPA8/Hsc70 is direct.

It is found in the cytoplasm. Its subcellular location is the nucleus. Functionally, co-chaperone that binds misfolded and hydrophobic patches-containing client proteins in the cytosol. Mediates their targeting to the endoplasmic reticulum but also regulates their sorting to the proteasome when targeting fails. Functions in tail-anchored/type II transmembrane proteins membrane insertion constituting with ASNA1 and the BAG6 complex a targeting module. Functions upstream of the BAG6 complex and ASNA1, binding more rapidly the transmembrane domain of newly synthesized proteins. It is also involved in the regulation of the endoplasmic reticulum-associated misfolded protein catabolic process via its interaction with BAG6: collaborates with the BAG6 complex to maintain hydrophobic substrates in non-ubiquitinated states. Competes with RNF126 for interaction with BAG6, preventing the ubiquitination of client proteins associated with the BAG6 complex. Binds directly to HSC70 and HSP70 and regulates their ATPase activity. The chain is Small glutamine-rich tetratricopeptide repeat-containing protein alpha (SGTA) from Bos taurus (Bovine).